A 1090-amino-acid chain; its full sequence is Pullulanase (1090 aa).

A signal peptide spans 1 to 19 (MLRYTRNALVLGSLVLLSG). A lipid anchor (N-palmitoyl cysteine) is attached at Cys-20. Residue Cys-20 is the site of S-diacylglycerol cysteine attachment. Residue Asp-684 is the Nucleophile of the active site. Glu-713 (proton donor) is an active-site residue.

Belongs to the glycosyl hydrolase 13 family. In terms of assembly, homotrimer.

It localises to the cell membrane. It carries out the reaction Hydrolysis of (1-&gt;6)-alpha-D-glucosidic linkages in pullulan, amylopectin and glycogen, and in the alpha- and beta-limit dextrins of amylopectin and glycogen.. The chain is Pullulanase (pulA) from Klebsiella pneumoniae.